Reading from the N-terminus, the 304-residue chain is Glutaminase (304 aa).

Residues Ser-61, Asn-113, Glu-158, Asn-165, Tyr-189, Tyr-240, and Val-258 each coordinate substrate.

The protein belongs to the glutaminase family. As to quaternary structure, homotetramer.

It catalyses the reaction L-glutamine + H2O = L-glutamate + NH4(+). The chain is Glutaminase from Fusobacterium nucleatum subsp. nucleatum (strain ATCC 25586 / DSM 15643 / BCRC 10681 / CIP 101130 / JCM 8532 / KCTC 2640 / LMG 13131 / VPI 4355).